We begin with the raw amino-acid sequence, 374 residues long: DNA replication and repair protein RecF (374 aa).

Residue 34-41 (GNNGAGKT) coordinates ATP.

The protein belongs to the RecF family.

The protein resides in the cytoplasm. The RecF protein is involved in DNA metabolism; it is required for DNA replication and normal SOS inducibility. RecF binds preferentially to single-stranded, linear DNA. It also seems to bind ATP. This chain is DNA replication and repair protein RecF, found in Rhizobium etli (strain CIAT 652).